The primary structure comprises 616 residues: UvrABC system protein C (616 aa).

The 80-residue stretch at 12 to 91 (ESPGVYLWKD…IKEYHPRFNI (80 aa)) folds into the GIY-YIG domain. In terms of domain architecture, UVR spans 202–237 (SDVMHHVRERMLDASERLDFERAAELRDALAHLEKM).

The protein belongs to the UvrC family. Interacts with UvrB in an incision complex.

The protein resides in the cytoplasm. The UvrABC repair system catalyzes the recognition and processing of DNA lesions. UvrC both incises the 5' and 3' sides of the lesion. The N-terminal half is responsible for the 3' incision and the C-terminal half is responsible for the 5' incision. This is UvrABC system protein C from Gemmatimonas aurantiaca (strain DSM 14586 / JCM 11422 / NBRC 100505 / T-27).